The primary structure comprises 463 residues: ATP-dependent protease ATPase subunit HslU (463 aa).

Residues Ile19, 61–66 (GVGKTE), Asp277, Glu341, and Arg413 each bind ATP.

This sequence belongs to the ClpX chaperone family. HslU subfamily. A double ring-shaped homohexamer of HslV is capped on each side by a ring-shaped HslU homohexamer. The assembly of the HslU/HslV complex is dependent on binding of ATP.

The protein resides in the cytoplasm. ATPase subunit of a proteasome-like degradation complex; this subunit has chaperone activity. The binding of ATP and its subsequent hydrolysis by HslU are essential for unfolding of protein substrates subsequently hydrolyzed by HslV. HslU recognizes the N-terminal part of its protein substrates and unfolds these before they are guided to HslV for hydrolysis. In Bacillus cereus (strain 03BB102), this protein is ATP-dependent protease ATPase subunit HslU.